Consider the following 92-residue polypeptide: Large ribosomal subunit protein bL27 (92 aa).

A disordered region spans residues 1–26 (MAHKKGASSSSNGRDSESKRLGVKRF).

The protein belongs to the bacterial ribosomal protein bL27 family.

This Corynebacterium aurimucosum (strain ATCC 700975 / DSM 44827 / CIP 107346 / CN-1) (Corynebacterium nigricans) protein is Large ribosomal subunit protein bL27.